Here is a 314-residue protein sequence, read N- to C-terminus: Splicing factor YJU2 (314 aa).

Zn(2+) is bound by residues Cys-43, Cys-46, Cys-80, and Cys-83. Disordered stretches follow at residues 178-238 (MSQE…NEVP) and 253-314 (LAGL…DSDS). Basic and acidic residues predominate over residues 200–209 (EEARHRRLLE). Residues Ser-211, Ser-213, and Ser-220 each carry the phosphoserine modification. Residues 222–232 (PRAAARPNPTA) are compositionally biased toward low complexity. Residues 290-302 (PTPQTPGTSSLSQ) show a composition bias toward polar residues. Phosphoserine is present on residues Ser-309, Ser-312, and Ser-314.

The protein belongs to the CWC16 family. YJU2 subfamily. Component of the spliceosome. Present in the activated B complex, the catalytically activated B* complex which catalyzes the branching, the catalytic step 1 C complex catalyzing the exon ligation, and the postcatalytic P complex containing the ligated exons (mRNA) and the excised lariat intron.

It is found in the nucleus. Its function is as follows. Part of the spliceosome which catalyzes two sequential transesterification reactions, first the excision of the non-coding intron from pre-mRNA and then the ligation of the coding exons to form the mature mRNA. Plays a role in stabilizing the structure of the spliceosome catalytic core and docking of the branch helix into the active site, producing 5'-exon and lariat intron-3'-intermediates. May protect cells from TP53-dependent apoptosis upon dsDNA break damage through association with PRP19-CD5L complex. The chain is Splicing factor YJU2 from Mus musculus (Mouse).